We begin with the raw amino-acid sequence, 266 residues long: Oxygen-evolving enhancer protein 2-3, chloroplastic (266 aa).

The transit peptide at 1–80 directs the protein to the chloroplast; that stretch reads MASTQCFLHH…VGSKVSPADA (80 aa).

The protein belongs to the PsbP family.

The protein localises to the plastid. Its subcellular location is the chloroplast thylakoid membrane. May be involved in the regulation of photosystem II. The protein is Oxygen-evolving enhancer protein 2-3, chloroplastic (PSBP3) of Nicotiana tabacum (Common tobacco).